Consider the following 1563-residue polypeptide: DNA-directed RNA polymerase subunit beta' (1563 aa).

Residues Cys-61, Cys-63, Cys-76, and Cys-79 each coordinate Zn(2+). Residues Asp-588, Asp-590, and Asp-592 each coordinate Mg(2+). Zn(2+)-binding residues include Cys-925, Cys-999, Cys-1006, and Cys-1009.

The protein belongs to the RNA polymerase beta' chain family. As to quaternary structure, the RNAP catalytic core consists of 2 alpha, 1 beta, 1 beta' and 1 omega subunit. When a sigma factor is associated with the core the holoenzyme is formed, which can initiate transcription. Requires Mg(2+) as cofactor. The cofactor is Zn(2+).

It catalyses the reaction RNA(n) + a ribonucleoside 5'-triphosphate = RNA(n+1) + diphosphate. In terms of biological role, DNA-dependent RNA polymerase catalyzes the transcription of DNA into RNA using the four ribonucleoside triphosphates as substrates. The polypeptide is DNA-directed RNA polymerase subunit beta' (Hydrogenobaculum sp. (strain Y04AAS1)).